A 301-amino-acid chain; its full sequence is Probable alpha-L-glutamate ligase (301 aa).

Residues 104 to 287 (LQLLSRKGIG…VAGLIYEFIE (184 aa)) form the ATP-grasp domain. Residues lysine 141, 178 to 179 (EF), aspartate 187, and 211 to 213 (RSN) each bind ATP. Residues aspartate 248, glutamate 260, and asparagine 262 each coordinate Mg(2+). Mn(2+) is bound by residues aspartate 248, glutamate 260, and asparagine 262.

Belongs to the RimK family. Requires Mg(2+) as cofactor. It depends on Mn(2+) as a cofactor.

This chain is Probable alpha-L-glutamate ligase, found in Shewanella loihica (strain ATCC BAA-1088 / PV-4).